A 1522-amino-acid polypeptide reads, in one-letter code: Myosin-15 (1522 aa).

The Myosin N-terminal SH3-like domain occupies 12 to 61 (RKGDKVWVEDKDLAWIAADVLDSFDNKLHVETSTGKKVFVSPEKLFRRDP). The Myosin motor domain occupies 67–737 (NGVDDMTKLT…QIGILDSRRA (671 aa)). ATP-binding positions include 161 to 168 (GESGAGKT) and 214 to 222 (NDNSSRFGK). Actin-binding regions lie at residues 499–533 (LIEK…FQNF), 535–558 (FHPR…AGKV), 593–618 (FPSA…KQQL), and 618–640 (LQAL…KPNS). 5 IQ domains span residues 763 to 792 (ARAS…AAAA), 788 to 817 (NAAA…AAIV), 811 to 840 (LVSA…HRAA), 836 to 865 (EHRA…SIIA), and 859 to 888 (RQSS…VANE). Positions 889-1059 (AGALRLAKTK…NQVLMQKTLI (171 aa)) form a coiled coil. In terms of domain architecture, Dilute spans 1164–1456 (NIIIEGINEA…VSQMRVLVDK (293 aa)).

It belongs to the TRAFAC class myosin-kinesin ATPase superfamily. Myosin family. Plant myosin class XI subfamily. In terms of assembly, homodimer. Interacts with MYOB1 and MYOB7. Interacts with WIT1 and WIT2. Core component of the LINC complex which is composed of inner nuclear membrane SUN domain-containing proteins coupled to outer nuclear membrane WIP and WIT proteins. The LINC complex also involves nucleoskeletal proteins CRWN/LINC and possibly KAKU4 and the cytoskeletal myosin KAKU1.

Its subcellular location is the cytoplasm. It is found in the nucleus membrane. Functionally, myosin heavy chain that is required for the cell cycle-regulated transport of various organelles and proteins for their segregation. Functions by binding with its tail domain to receptor proteins on organelles and exerting force with its N-terminal motor domain against actin filaments, thereby transporting its cargo along polarized actin cables. Involved in trafficking of Golgi stacks and mitochondria. Plays a role in nuclear shape determination. Drives nuclear movement along actin filaments. As component of the SUN-WIP-WIT2-KAKU1 complex, mediates the transfer of cytoplasmic forces to the nuclear envelope (NE), leading to nuclear shape changes. This is Myosin-15 (XI-I) from Arabidopsis thaliana (Mouse-ear cress).